Here is a 399-residue protein sequence, read N- to C-terminus: Phosphoglycerate kinase (399 aa).

Residues Asp21 to Asn23, Arg36, His59 to Arg62, Arg120, and Arg158 each bind substrate. Residues Lys209, Gly297, Glu328, and Gly355–Ser358 each bind ATP.

The protein belongs to the phosphoglycerate kinase family. Monomer.

It localises to the cytoplasm. It catalyses the reaction (2R)-3-phosphoglycerate + ATP = (2R)-3-phospho-glyceroyl phosphate + ADP. It participates in carbohydrate degradation; glycolysis; pyruvate from D-glyceraldehyde 3-phosphate: step 2/5. This chain is Phosphoglycerate kinase, found in Streptococcus thermophilus (strain CNRZ 1066).